We begin with the raw amino-acid sequence, 185 residues long: MLTDNRKIFLIGPMGAGKSTIGRQLAQRLNLEFFDSDREIETCTGVNISWVFDVEGEVGFRNREEKIIDELTQKKSIVLATGGGSIKSHIARDHLAKRGLVIYLKTTIDKQLVRTKRDKRRPLLKSSTLFNYQNLRELLEDLAKERNPLYEEISDITVSTDEYSVKCVVNKILVLLKKNGAIYKD.

15–20 (GAGKST) lines the ATP pocket. S19 contacts Mg(2+). Substrate contacts are provided by D37, R61, and G83. R121 contacts ATP. Residue R146 coordinates substrate.

The protein belongs to the shikimate kinase family. In terms of assembly, monomer. Mg(2+) serves as cofactor.

The protein resides in the cytoplasm. The catalysed reaction is shikimate + ATP = 3-phosphoshikimate + ADP + H(+). It functions in the pathway metabolic intermediate biosynthesis; chorismate biosynthesis; chorismate from D-erythrose 4-phosphate and phosphoenolpyruvate: step 5/7. Its function is as follows. Catalyzes the specific phosphorylation of the 3-hydroxyl group of shikimic acid using ATP as a cosubstrate. The polypeptide is Shikimate kinase (Blochmanniella floridana).